The following is a 125-amino-acid chain: Small ribosomal subunit protein uS12 (125 aa).

Position 89 is a 3-methylthioaspartic acid (Asp89).

It belongs to the universal ribosomal protein uS12 family. In terms of assembly, part of the 30S ribosomal subunit. Contacts proteins S8 and S17. May interact with IF1 in the 30S initiation complex.

Its function is as follows. With S4 and S5 plays an important role in translational accuracy. Interacts with and stabilizes bases of the 16S rRNA that are involved in tRNA selection in the A site and with the mRNA backbone. Located at the interface of the 30S and 50S subunits, it traverses the body of the 30S subunit contacting proteins on the other side and probably holding the rRNA structure together. The combined cluster of proteins S8, S12 and S17 appears to hold together the shoulder and platform of the 30S subunit. The protein is Small ribosomal subunit protein uS12 of Acidovorax sp. (strain JS42).